The primary structure comprises 347 residues: Merozoite surface protein 2 (347 aa).

A signal peptide spans 1-20 (MKVIKTLSIINFFIFVTFNI). N-linked (GlcNAc...) asparagine glycans are attached at residues Asn-22 and Asn-36. The interval 44 to 273 (AESKPPTGDG…EQTESPELQS (230 aa)) is polymorphic region. Tandem repeats lie at residues 53-60 (GAVASAGN), 61-68 (GAVASAGN), 69-76 (GAVASAGN), 77-84 (GAVASAGN), 85-88 (GAGN), 89-92 (GAGN), 93-96 (GAGN), 97-100 (GAGN), 101-104 (GAGN), 105-108 (GAGN), 109-112 (GAGN), 113-116 (GAGN), 117-120 (GAGN), 121-124 (GAGN), 125-128 (GAGN), 129-132 (GAGN), 133-136 (GAGN), 137-140 (GAGN), 141-144 (GAGN), 145-152 (GAVASAGN), 153-156 (GAGN), and 157-164 (GAVASAGN). Residues 53–164 (GAVASAGNGA…GNGAVASAGN (112 aa)) are 6 X 8 AA repeats of G-A-V-A-S-A-G-N. A 16 X 4 AA repeats of G-A-G-N region spans residues 85-156 (GAGNGAGNGA…VASAGNGAGN (72 aa)). Residues 165 to 206 (GAVAERSSSTPATTTTTTTTNDAEASTSTSSENSNHNNAETN) show a composition bias toward low complexity. The segment at 165-308 (GAVAERSSST…DSQKECTDGN (144 aa)) is disordered. Polar residues-rich tracts occupy residues 213-240 (VQPN…NVPR) and 247-275 (KSPT…QSAP). Asn-224 carries N-linked (GlcNAc...) asparagine glycosylation. N-linked (GlcNAc...) asparagine glycosylation occurs at Asn-296. The cysteines at positions 304 and 312 are disulfide-linked. Asn-320 and Asn-321 each carry an N-linked (GlcNAc...) asparagine glycan. A lipid anchor (GPI-anchor amidated asparagine) is attached at Asn-321. A propeptide spans 322–347 (SSNIASINKFVVLISATLVLSFAIFI) (removed in mature form).

The protein resides in the cell membrane. Its function is as follows. May play a role in the merozoite attachment to the erythrocyte. The sequence is that of Merozoite surface protein 2 from Plasmodium falciparum (isolate Nig32 / Nigeria).